We begin with the raw amino-acid sequence, 265 residues long: Protein Pars_0096 (265 aa).

Belongs to the CinA family.

In Pyrobaculum arsenaticum (strain DSM 13514 / JCM 11321 / PZ6), this protein is Protein Pars_0096.